The primary structure comprises 762 residues: 5-methyltetrahydropteroyltriglutamate--homocysteine methyltransferase (762 aa).

Residues 16 to 19 and Lys118 each bind 5-methyltetrahydropteroyltri-L-glutamate; that span reads RELK. Residues 439–441 and Glu492 each bind L-homocysteine; that span reads IGS. Residues 439 to 441 and Glu492 each bind L-methionine; that span reads IGS. Residues 523 to 524 and Trp569 each bind 5-methyltetrahydropteroyltri-L-glutamate; that span reads RC. Asp607 is a binding site for L-homocysteine. Position 607 (Asp607) interacts with L-methionine. A 5-methyltetrahydropteroyltri-L-glutamate-binding site is contributed by Glu613. Zn(2+) is bound by residues His649, Cys651, and Glu673. The Proton donor role is filled by His702. Cys734 contacts Zn(2+).

The protein belongs to the vitamin-B12 independent methionine synthase family. Zn(2+) is required as a cofactor.

It catalyses the reaction 5-methyltetrahydropteroyltri-L-glutamate + L-homocysteine = tetrahydropteroyltri-L-glutamate + L-methionine. The protein operates within amino-acid biosynthesis; L-methionine biosynthesis via de novo pathway; L-methionine from L-homocysteine (MetE route): step 1/1. Catalyzes the transfer of a methyl group from 5-methyltetrahydrofolate to homocysteine resulting in methionine formation. This chain is 5-methyltetrahydropteroyltriglutamate--homocysteine methyltransferase, found in Pseudomonas entomophila (strain L48).